The sequence spans 552 residues: MTVGDHLVARMRAAGISVVCGLPTSRLDSLLVRLSRDAGFQIVLARHEGGAGYLADGFARASGKSAAVFVAGPGATNVISAVANASVNQVPMLILTGEVAVGEFGLHSQQDTSDDGLGLGATFRRFCRCSVSIESIANARSKIDSAFRALASIPRGPVHIALPRDLVDERLPAHQLGTAAAGLGGLRTLAPCGPDVADEVIGRLDRSRAPMLVLGNGCRLDGIGEQIVAFCEKAGLPFATTPNGRGIVAETHPLSLGVLGIFGDGRADEYLFDTPCDLLIAVGVSFGGLVTRSFSPRWRGLKADVVHVDPDPSAVGRFVATSLGITTSGRAFVNALNCGRPPRFCRRVGVRPPAPAALPGTPQARGESIHPLELMHELDRELAPNATICADVGTCISWTFRGIPVRRPGRFFATVDFSPMGCGIAGAIGVALARPEEHVICIAGDGAFLMHGTEISTAVAHGIRVTWAVLNDGQMSASAGPVSGRMDPSPVARIGANDLAAMARALGAEGIRVDTRCELRAGVQKALAATGPCVLDIAIDPEINKPDIGLGR.

Glu48 is a binding site for thiamine diphosphate. FAD contacts are provided by residues 262–285 and 309–328; these read FGDGRADEYLFDTPCDLLIAVGVS and DPDPSAVGRFVATSLGITTS. A thiamine pyrophosphate binding region spans residues 394 to 474; it reads TCISWTFRGI…VTWAVLNDGQ (81 aa). A Mg(2+)-binding site is contributed by Asp445.

It belongs to the TPP enzyme family. In terms of assembly, heterodimer of large catalytic subunit and small regulatory subunit. Requires Mg(2+) as cofactor. It depends on thiamine diphosphate as a cofactor.

It carries out the reaction 2 pyruvate + H(+) = (2S)-2-acetolactate + CO2. It functions in the pathway amino-acid biosynthesis; L-isoleucine biosynthesis; L-isoleucine from 2-oxobutanoate: step 1/4. Its pathway is amino-acid biosynthesis; L-valine biosynthesis; L-valine from pyruvate: step 1/4. In terms of biological role, catalyzes the conversion of 2 pyruvate molecules into acetolactate in the first common step of the biosynthetic pathway of the branched-amino acids such as leucine, isoleucine, and valine. This chain is Putative acetolactate synthase large subunit IlvB2 (ilvB2), found in Mycobacterium tuberculosis (strain ATCC 25618 / H37Rv).